A 229-amino-acid polypeptide reads, in one-letter code: Large ribosomal subunit protein uL1 (229 aa).

It belongs to the universal ribosomal protein uL1 family. Part of the 50S ribosomal subunit.

Binds directly to 23S rRNA. The L1 stalk is quite mobile in the ribosome, and is involved in E site tRNA release. Functionally, protein L1 is also a translational repressor protein, it controls the translation of the L11 operon by binding to its mRNA. The polypeptide is Large ribosomal subunit protein uL1 (Clostridium tetani (strain Massachusetts / E88)).